A 209-amino-acid chain; its full sequence is MSNVHVIDHPLVQHKLTLMRRKDASTNSFRRLLGELSTLMAYEVTRDMPLQDIQIETPLETMTGKVIDGKKLVLVSILRAGNGFLDGMLNVVPGARIGHIGLYRDPDTLQPVEYYFKMPSEMAERDIIVVDPMLATGNSAAAAVARLKQLQPRSIKFVCLLAAPEGVATLQKAHPDVPIYTAAIDRELNDHGYILPGLGDAGDRIFGTK.

Residues Arg-79, Arg-104, and 131-139 (DPMLATGNS) contribute to the 5-phospho-alpha-D-ribose 1-diphosphate site. Residues Ile-194 and 199 to 201 (GDA) each bind uracil. Asp-200 is a 5-phospho-alpha-D-ribose 1-diphosphate binding site.

It belongs to the UPRTase family. It depends on Mg(2+) as a cofactor.

The enzyme catalyses UMP + diphosphate = 5-phospho-alpha-D-ribose 1-diphosphate + uracil. It functions in the pathway pyrimidine metabolism; UMP biosynthesis via salvage pathway; UMP from uracil: step 1/1. With respect to regulation, allosterically activated by GTP. Functionally, catalyzes the conversion of uracil and 5-phospho-alpha-D-ribose 1-diphosphate (PRPP) to UMP and diphosphate. This is Uracil phosphoribosyltransferase from Acidovorax sp. (strain JS42).